We begin with the raw amino-acid sequence, 510 residues long: Conditioned medium factor receptor 1 (510 aa).

Over 1–36 the chain is Cytoplasmic; that stretch reads MDSKYIQKTLSAITEQITKNAAVQKVLDNKFVKEHK. The chain crosses the membrane as a helical span at residues 37–55; sequence YAAAAATVGLGVVAATTIV. At 56–510 the chain is on the extracellular side; sequence KAVNCEGKRY…QGKKQIKKLD (455 aa).

It localises to the membrane. Functionally, receptor for cmfA, that appears to mediate the G-independent cmfA signal transduction. This is Conditioned medium factor receptor 1 (cmfB) from Dictyostelium discoideum (Social amoeba).